The primary structure comprises 117 residues: Replication initiation control protein YabA (117 aa).

Residues Asn45–Asp81 are disordered. Composition is skewed to basic and acidic residues over residues Gln46–Glu62 and Gly72–Asp81. Residues His92, Cys94, Cys107, and Cys110 each contribute to the Zn(2+) site.

The protein belongs to the YabA family. As to quaternary structure, homotetramer. Interacts with both DnaA and DnaN, acting as a bridge between these two proteins. Requires Zn(2+) as cofactor.

Its subcellular location is the cytoplasm. It localises to the nucleoid. Involved in control of chromosome replication initiation. Inhibits the cooperative binding of DnaA to the oriC region, thus negatively regulating initiation of chromosome replication. Inhibits the ability of DnaA-ATP to form a helix on DNA; does not disassemble preformed DnaA-DNA helices. Decreases the residence time of DnaA on the chromosome at its binding sites (oriC, replication forks and promoter-binding sites). Tethers DnaA to the replication machinery via the DNA polymerase beta sliding clamp subunit (dnaN). Associates with oriC and other DnaA targets on the chromosome in a DnaA-dependent manner. In Bacillus pumilus (strain SAFR-032), this protein is Replication initiation control protein YabA.